Consider the following 354-residue polypeptide: tRNA dimethylallyltransferase (354 aa).

28 to 35 (GPTATGKS) provides a ligand contact to ATP. Residue 30 to 35 (TATGKS) participates in substrate binding. Positions 53–56 (DSRQ) are interaction with substrate tRNA.

This sequence belongs to the IPP transferase family. As to quaternary structure, monomer. The cofactor is Mg(2+).

The enzyme catalyses adenosine(37) in tRNA + dimethylallyl diphosphate = N(6)-dimethylallyladenosine(37) in tRNA + diphosphate. Its function is as follows. Catalyzes the transfer of a dimethylallyl group onto the adenine at position 37 in tRNAs that read codons beginning with uridine, leading to the formation of N6-(dimethylallyl)adenosine (i(6)A). This is tRNA dimethylallyltransferase from Synechococcus sp. (strain JA-2-3B'a(2-13)) (Cyanobacteria bacterium Yellowstone B-Prime).